The primary structure comprises 470 residues: MALSSVSSCEPMEDEMSIMGSDTEDNFTGGDTCAEATRGLVNKSAFVPTQTVGTVSALRNVVGNPPKSVVVSFSASPQRAQPSNPKSERPAFGHGRRNRRRPFRRNNWKQQQRGWEKPEPENVPARQSAGSWPKRSSLPVHMRLGQRGGDSSSADSGHGGAGPSDRWRFKTRTQSVARVHRNRRRGNANHGSNTPGRSAGDRLNAAAARSIADVCRRVTSSRIGEMFHGARETLTTPVKNGGFRAENSSPWAPVLGFGSDQFNPEARRITWDTLVEHGVNLYKLFEVRSHAAEAARSLRDAVMRGENLLEALASADETLSWCKMIVTKNLPMRTRDPIISSSVALLDNLRLKLEPFMRCYLSSSGSPTLAELCDHQRLSDVACVPTFMFVMLARIARAVGSGAETVSRDALGPDGRVLADYVPGACLAGTLEAIDAHKRRCKADTCSLVSAYTLVPVYLHGKYFYCNQIF.

2 disordered regions span residues Met-1–Asp-31 and Phe-73–Arg-202. Over residues Phe-73–Pro-85 the composition is skewed to polar residues. Basic residues-rich tracts occupy residues His-94–Asn-107 and Arg-178–Asn-187. Zn(2+) contacts are provided by Cys-359, His-437, Cys-441, and Cys-446. The segment at Cys-359–Cys-446 adopts a CHC2-type zinc-finger fold.

This sequence belongs to the HHV-1 ICP27 protein family. As to quaternary structure, homodimer. Homodimerization is required for transactivation. Associates in a complex with RNA, and host export factors NXF1/TAP and ALYREF; these interactions allow nuclear export of viral transcripts. Interacts with three host shuttling SR proteins SRSF1, SRSF3 and SRSF7. Interacts with host SRPK1. Interacts with IE62; this interaction enhances IE62 transactivation.

The protein resides in the host cytoplasm. The protein localises to the host nucleus. In terms of biological role, multifunctional regulator of the expression of viral genes that mediates nuclear export of viral intronless mRNAs. This immediate early (EI) protein promotes the nuclear export of viral intronless mRNAs by interacting with mRNAs and host NXF1/TAP. This chain is mRNA export factor ICP27 homolog, found in Equine herpesvirus 1 (strain Kentucky A) (EHV-1).